The chain runs to 203 residues: Large ribosomal subunit protein bL25 (203 aa).

Belongs to the bacterial ribosomal protein bL25 family. CTC subfamily. In terms of assembly, part of the 50S ribosomal subunit; part of the 5S rRNA/L5/L18/L25 subcomplex. Contacts the 5S rRNA. Binds to the 5S rRNA independently of L5 and L18.

This is one of the proteins that binds to the 5S RNA in the ribosome where it forms part of the central protuberance. In Cereibacter sphaeroides (strain ATCC 17025 / ATH 2.4.3) (Rhodobacter sphaeroides), this protein is Large ribosomal subunit protein bL25.